Here is a 56-residue protein sequence, read N- to C-terminus: Large ribosomal subunit protein bL32 (56 aa).

The tract at residues 1–37 (MAVQQNKKSRSRRDMRRSHDALTTAAVSVDKASGETH) is disordered. Residues 7–16 (KKSRSRRDMR) show a composition bias toward basic residues.

It belongs to the bacterial ribosomal protein bL32 family.

The sequence is that of Large ribosomal subunit protein bL32 from Haemophilus influenzae (strain PittEE).